A 165-amino-acid chain; its full sequence is V-type proton ATPase 16 kDa proteolipid subunit (165 aa).

Topologically, residues 1–10 (MPSTFSGDET) are lumenal. A helical membrane pass occupies residues 11–33 (APFFGFLGAAAALVFSCMGAAYG). The Cytoplasmic portion of the chain corresponds to 34–55 (TAKSGVGVASMGVMRPELVMKS). Residues 56-76 (IVPVVMAGVLGIYGLIIAVII) form a helical membrane-spanning segment. The Lumenal segment spans residues 77 to 95 (STGINPKTKSYYLFDGYAH). The helical transmembrane segment at 96-117 (LSSGLACGLAGLSAGMAIGIVG) threads the bilayer. The Cytoplasmic segment spans residues 118–129 (DAGVRANAQQPK). A helical transmembrane segment spans residues 130 to 155 (LFVGMILILIFAEALALYGLIVGIIL). Residues 156 to 165 (SSRAGQSRAE) are Lumenal-facing.

It belongs to the V-ATPase proteolipid subunit family. In terms of assembly, V-ATPase is a heteromultimeric enzyme composed of a peripheral catalytic V1 complex (main components: subunits A, B, C, D, E, and F) attached to an integral membrane V0 proton pore complex (main component: the proteolipid protein; which is present as a hexamer that forms the proton-conducting pore).

It localises to the vacuole membrane. Its function is as follows. Proton-conducting pore forming subunit of the membrane integral V0 complex of vacuolar ATPase. V-ATPase is responsible for acidifying a variety of intracellular compartments in eukaryotic cells. The protein is V-type proton ATPase 16 kDa proteolipid subunit of Nicotiana tabacum (Common tobacco).